A 301-amino-acid polypeptide reads, in one-letter code: ATP synthase gamma chain (301 aa).

Belongs to the ATPase gamma chain family. In terms of assembly, F-type ATPases have 2 components, CF(1) - the catalytic core - and CF(0) - the membrane proton channel. CF(1) has five subunits: alpha(3), beta(3), gamma(1), delta(1), epsilon(1). CF(0) has three main subunits: a, b and c.

Its subcellular location is the cell inner membrane. In terms of biological role, produces ATP from ADP in the presence of a proton gradient across the membrane. The gamma chain is believed to be important in regulating ATPase activity and the flow of protons through the CF(0) complex. The sequence is that of ATP synthase gamma chain from Helicobacter pylori (strain Shi470).